The following is a 333-amino-acid chain: Putative ketol-acid reductoisomerase 2 (333 aa).

Residues 1–182 enclose the KARI N-terminal Rossmann domain; sequence MDKTVLDANL…AIPGGIAVIS (182 aa). Residues 183–329 enclose the KARI C-terminal knotted domain; it reads SFEEEALLDL…KELYKLLGRK (147 aa).

The protein belongs to the ketol-acid reductoisomerase family.

The catalysed reaction is (2R)-2,3-dihydroxy-3-methylbutanoate + NADP(+) = (2S)-2-acetolactate + NADPH + H(+). It catalyses the reaction (2R,3R)-2,3-dihydroxy-3-methylpentanoate + NADP(+) = (S)-2-ethyl-2-hydroxy-3-oxobutanoate + NADPH + H(+). The protein operates within amino-acid biosynthesis; L-isoleucine biosynthesis; L-isoleucine from 2-oxobutanoate: step 2/4. It participates in amino-acid biosynthesis; L-valine biosynthesis; L-valine from pyruvate: step 2/4. The chain is Putative ketol-acid reductoisomerase 2 (ilvC2) from Saccharolobus solfataricus (strain ATCC 35092 / DSM 1617 / JCM 11322 / P2) (Sulfolobus solfataricus).